The following is a 310-amino-acid chain: Cysteine synthase (310 aa).

Lysine 44 is subject to N6-(pyridoxal phosphate)lysine. Pyridoxal 5'-phosphate-binding positions include asparagine 74, 179–183 (GTGGT), and serine 267.

The protein belongs to the cysteine synthase/cystathionine beta-synthase family. The cofactor is pyridoxal 5'-phosphate.

The enzyme catalyses O-acetyl-L-serine + hydrogen sulfide = L-cysteine + acetate. Its pathway is amino-acid biosynthesis; L-cysteine biosynthesis; L-cysteine from L-serine: step 2/2. The protein is Cysteine synthase (cysK) of Neisseria meningitidis serogroup B (strain ATCC BAA-335 / MC58).